A 1288-amino-acid polypeptide reads, in one-letter code: Contactin-associated protein-like 3 (1288 aa).

The first 25 residues, Met1–Ala25, serve as a signal peptide directing secretion. At Gly26–Ala1245 the chain is on the extracellular side. Positions Cys31–Cys177 constitute an F5/8 type C domain. Cys31 and Cys177 are disulfide-bonded. 2 consecutive Laminin G-like domains span residues Val183–Cys364 and Val370–Cys545. 4 N-linked (GlcNAc...) asparagine glycosylation sites follow: Asn285, Asn359, Asn441, and Asn497. A disulfide bridge links Cys332 with Cys364. Disulfide bonds link Cys513–Cys545, Cys551–Cys562, Cys556–Cys571, and Cys573–Cys583. An EGF-like 1 domain is found at Cys551 to Cys583. Residues His584–Trp792 enclose the Fibrinogen C-terminal domain. Residues Asn623 and Asn706 are each glycosylated (N-linked (GlcNAc...) asparagine). Residues Asn793 to Cys958 form the Laminin G-like 3 domain. 4 disulfides stabilise this stretch: Cys931–Cys958, Cys962–Cys975, Cys969–Cys984, and Cys986–Cys996. In terms of domain architecture, EGF-like 2 spans Cys962–Cys996. The region spanning Gln1015 to Cys1203 is the Laminin G-like 4 domain. 3 N-linked (GlcNAc...) asparagine glycosylation sites follow: Asn1023, Asn1073, and Asn1120. A disulfide bridge links Cys1167 with Cys1203. Residues Glu1215–Leu1236 are disordered. The chain crosses the membrane as a helical span at residues Val1246–Ile1266. The Cytoplasmic portion of the chain corresponds to Arg1267–Cys1288.

It belongs to the neurexin family.

Its subcellular location is the cell membrane. It localises to the secreted. The protein is Contactin-associated protein-like 3 (CNTNAP3) of Homo sapiens (Human).